The following is a 278-amino-acid chain: 4-deoxy-L-threo-5-hexosulose-uronate ketol-isomerase (278 aa).

H196, H198, E203, and H245 together coordinate Zn(2+).

Belongs to the KduI family. Requires Zn(2+) as cofactor.

The catalysed reaction is 5-dehydro-4-deoxy-D-glucuronate = 3-deoxy-D-glycero-2,5-hexodiulosonate. The protein operates within glycan metabolism; pectin degradation; 2-dehydro-3-deoxy-D-gluconate from pectin: step 4/5. Its function is as follows. Catalyzes the isomerization of 5-dehydro-4-deoxy-D-glucuronate to 3-deoxy-D-glycero-2,5-hexodiulosonate. This Yersinia pseudotuberculosis serotype O:1b (strain IP 31758) protein is 4-deoxy-L-threo-5-hexosulose-uronate ketol-isomerase.